A 123-amino-acid polypeptide reads, in one-letter code: Diacylglycerol kinase (123 aa).

A helical membrane pass occupies residues 15 to 32; it reads ILNATGYSLAGFLAAFRG. Glu-33 lines the a divalent metal cation pocket. A run of 3 helical transmembrane segments spans residues 35-55, 61-81, and 102-122; these read AFRQ…LLDV, ALMI…SAIE, and GSAA…TILL. Glu-74 functions as the Proton acceptor in the catalytic mechanism. An a divalent metal cation-binding site is contributed by Glu-81.

Belongs to the bacterial diacylglycerol kinase family. It depends on Mg(2+) as a cofactor.

The protein resides in the cell inner membrane. It catalyses the reaction a 1,2-diacyl-sn-glycerol + ATP = a 1,2-diacyl-sn-glycero-3-phosphate + ADP + H(+). Its function is as follows. Catalyzes the ATP-dependent phosphorylation of sn-l,2-diacylglycerol (DAG) to phosphatidic acid. Involved in the recycling of diacylglycerol produced as a by-product during membrane-derived oligosaccharide (MDO) biosynthesis. In Pseudomonas aeruginosa (strain ATCC 15692 / DSM 22644 / CIP 104116 / JCM 14847 / LMG 12228 / 1C / PRS 101 / PAO1), this protein is Diacylglycerol kinase (dgkA).